A 333-amino-acid polypeptide reads, in one-letter code: Phosphate acyltransferase (333 aa).

It belongs to the PlsX family. In terms of assembly, homodimer. Probably interacts with PlsY.

The protein localises to the cytoplasm. The catalysed reaction is a fatty acyl-[ACP] + phosphate = an acyl phosphate + holo-[ACP]. It functions in the pathway lipid metabolism; phospholipid metabolism. In terms of biological role, catalyzes the reversible formation of acyl-phosphate (acyl-PO(4)) from acyl-[acyl-carrier-protein] (acyl-ACP). This enzyme utilizes acyl-ACP as fatty acyl donor, but not acyl-CoA. This Desulforamulus reducens (strain ATCC BAA-1160 / DSM 100696 / MI-1) (Desulfotomaculum reducens) protein is Phosphate acyltransferase.